The following is a 242-amino-acid chain: MRCFKATIAYDGAYFLGYAKQPNKLGVQDKIESALNALGIKSVVVAAGRTDKGVHANNQTLSFHAPKHWNAAKLFYCLAPKLAPHIVLKKLEEKNFHARFDAQKRAYRYLLTKNLKTPFLAPYIACGDYGSLDALNTALKQFTGKHDFSLFKKEGGATTNPKRAIFNAFAYKTFIIGHECVVFKIIGDAFLRSSVRLIIQACVQYSLEKITLAEIEMQIHNLKATIRTPIMANGLYLHRVYY.

Asp-51 acts as the Nucleophile in catalysis. A substrate-binding site is contributed by Tyr-107.

It belongs to the tRNA pseudouridine synthase TruA family. In terms of assembly, homodimer.

It catalyses the reaction uridine(38/39/40) in tRNA = pseudouridine(38/39/40) in tRNA. Its function is as follows. Formation of pseudouridine at positions 38, 39 and 40 in the anticodon stem and loop of transfer RNAs. This is tRNA pseudouridine synthase A from Helicobacter pylori (strain G27).